A 452-amino-acid chain; its full sequence is Pup--protein ligase 1 (452 aa).

Glu9 contributes to the Mg(2+) binding site. Arg53 contacts ATP. Position 55 (Tyr55) interacts with Mg(2+). The active-site Proton acceptor is Asp57. Mg(2+) is bound at residue Glu63. 2 residues coordinate ATP: Thr66 and Trp419.

It belongs to the Pup ligase/Pup deamidase family. Pup-conjugating enzyme subfamily.

The catalysed reaction is ATP + [prokaryotic ubiquitin-like protein]-L-glutamate + [protein]-L-lysine = ADP + phosphate + N(6)-([prokaryotic ubiquitin-like protein]-gamma-L-glutamyl)-[protein]-L-lysine.. The protein operates within protein degradation; proteasomal Pup-dependent pathway. Its pathway is protein modification; protein pupylation. In terms of biological role, catalyzes the covalent attachment of the prokaryotic ubiquitin-like protein modifier Pup to the proteasomal substrate proteins, thereby targeting them for proteasomal degradation. This tagging system is termed pupylation. The ligation reaction involves the side-chain carboxylate of the C-terminal glutamate of Pup and the side-chain amino group of a substrate lysine. In Rhodococcus erythropolis (Arthrobacter picolinophilus), this protein is Pup--protein ligase 1.